The chain runs to 82 residues: Sec-independent protein translocase protein TatA (82 aa).

The helical transmembrane segment at 1-21 (MGSFSIWHWLIVLLIVVMVFG) threads the bilayer. Positions 46–82 (GASTDDSATTSAPAGQVTNNSAAADKTTIDVEAKHKS) are disordered. Residues 49–67 (TDDSATTSAPAGQVTNNSA) show a composition bias toward polar residues. A compositionally biased stretch (basic and acidic residues) spans 72-82 (TTIDVEAKHKS).

Belongs to the TatA/E family. As to quaternary structure, the Tat system comprises two distinct complexes: a TatABC complex, containing multiple copies of TatA, TatB and TatC subunits, and a separate TatA complex, containing only TatA subunits. Substrates initially bind to the TatABC complex, which probably triggers association of the separate TatA complex to form the active translocon.

It is found in the cell inner membrane. Its function is as follows. Part of the twin-arginine translocation (Tat) system that transports large folded proteins containing a characteristic twin-arginine motif in their signal peptide across membranes. TatA could form the protein-conducting channel of the Tat system. This Acidovorax ebreus (strain TPSY) (Diaphorobacter sp. (strain TPSY)) protein is Sec-independent protein translocase protein TatA.